A 659-amino-acid chain; its full sequence is Pesticidal crystal protein Cry3Ba (659 aa).

The segment at 1 to 41 (MIRMGGRKMNPNNRSEYDTIKVTPNSELPTNHNQYPLADNP) is disordered. The segment covering 22–41 (VTPNSELPTNHNQYPLADNP) has biased composition (polar residues).

It belongs to the delta endotoxin family.

Its function is as follows. Promotes colloidosmotic lysis by binding to the midgut epithelial cells of Coleoptera. The protein is Pesticidal crystal protein Cry3Ba (cry3Ba) of Bacillus thuringiensis subsp. tolworthi.